Here is a 927-residue protein sequence, read N- to C-terminus: UPF0182 protein bll7333 (927 aa).

A run of 7 helical transmembrane segments spans residues 17–37 (AVVG…LLAL), 65–85 (AVVF…NGWL), 134–154 (LALL…QFVY), 185–205 (WMML…LVHG), 220–240 (VIAH…WSFG), 264–284 (VGLP…LAAW), and 297–317 (AAFL…PVLF).

This sequence belongs to the UPF0182 family.

It localises to the cell membrane. In Bradyrhizobium diazoefficiens (strain JCM 10833 / BCRC 13528 / IAM 13628 / NBRC 14792 / USDA 110), this protein is UPF0182 protein bll7333.